A 240-amino-acid chain; its full sequence is UDP-2,3-diacylglucosamine hydrolase (240 aa).

Mn(2+) contacts are provided by D8, H10, D41, N79, and H114. 79 to 80 is a substrate binding site; that stretch reads NR. Residues D122, S160, N164, K167, and H195 each contribute to the substrate site. Mn(2+) is bound by residues H195 and H197.

This sequence belongs to the LpxH family. Requires Mn(2+) as cofactor.

Its subcellular location is the cell inner membrane. It localises to the cytoplasm. It catalyses the reaction UDP-2-N,3-O-bis[(3R)-3-hydroxytetradecanoyl]-alpha-D-glucosamine + H2O = 2-N,3-O-bis[(3R)-3-hydroxytetradecanoyl]-alpha-D-glucosaminyl 1-phosphate + UMP + 2 H(+). It participates in glycolipid biosynthesis; lipid IV(A) biosynthesis; lipid IV(A) from (3R)-3-hydroxytetradecanoyl-[acyl-carrier-protein] and UDP-N-acetyl-alpha-D-glucosamine: step 4/6. With respect to regulation, inhibited by a sulfonyl piperazine compound that shows antibacterial activity against E.coli; LpxH is the cellular target of this compound. Inhibited by 0.01% (or more) Triton X-100 in vitro. Hydrolyzes the pyrophosphate bond of UDP-2,3-diacylglucosamine to yield 2,3-diacylglucosamine 1-phosphate (lipid X) and UMP by catalyzing the attack of water at the alpha-P atom. Involved in the biosynthesis of lipid A, a phosphorylated glycolipid that anchors the lipopolysaccharide to the outer membrane of the cell. Is essential for E.coli growth. Does not cleave the unacylated UDP-GlcNAc, the mono-acylated UDP-3-O-(R)-3-hydroxymyristoyl-GlcNAc, and CDP-diacylglycerol. The sequence is that of UDP-2,3-diacylglucosamine hydrolase from Escherichia coli (strain K12).